A 205-amino-acid polypeptide reads, in one-letter code: Thymidylate kinase (205 aa).

Residue 11 to 18 participates in ATP binding; sequence GVEGSGKS.

It belongs to the thymidylate kinase family.

It catalyses the reaction dTMP + ATP = dTDP + ADP. Functionally, phosphorylation of dTMP to form dTDP in both de novo and salvage pathways of dTTP synthesis. The polypeptide is Thymidylate kinase (Ruthia magnifica subsp. Calyptogena magnifica).